The chain runs to 993 residues: ATP-dependent DNA helicase MPH1 (993 aa).

The Helicase ATP-binding domain occupies 94–261; that stretch reads IVHKSLFQNT…EVVNNLDISK (168 aa). 107-114 contacts ATP; it reads IPTGMGKT. The short motif at 209–212 is the DEAH box element; the sequence is DEAH. Positions 507–655 constitute a Helicase C-terminal domain; the sequence is KVERLHRQEQ…CIDYKKSDRI (149 aa). Positions 530 to 551 are disordered; the sequence is NDKLERSARRTGSSEEAQISGM. Residues 539-551 are compositionally biased toward polar residues; sequence RTGSSEEAQISGM. The segment at 751-810 is FKH1-binding region; the sequence is LVTSNENPSKKRKIFKALDNLENDSTEEASSSLETEDEEVSDDNNVFIAEGQNGCQKDLE. T776 and T785 each carry phosphothreonine.

It belongs to the DEAD box helicase family. DEAH subfamily. FANCM sub-subfamily. In terms of assembly, interacts with the MHF histone-fold complex composed of MHF1 and MHF2 to form the FANCM-MHF complex. Interacts with FHK1. Post-translationally, phosphorylation at both Thr-776 and Thr-785 is required for the interaction with FKH1.

Its subcellular location is the nucleus. It catalyses the reaction ATP + H2O = ADP + phosphate + H(+). In terms of biological role, ATP-dependent DNA helicase involved in DNA damage repair by homologous recombination and in genome maintenance. Capable of unwinding D-loops. Plays a role in limiting crossover recombinants during mitotic DNA double-strand break (DSB) repair. Prevents crossovers between ectopic sequences by removing substrates for MUS81-MMS4 or RAD1-RAD10 cleavage. Component of a FANCM-MHF complex which promotes gene conversion at blocked replication forks, probably by reversal of the stalled fork. Binds to flap-structured DNA but not to non-flap nicked DNA, and participates in Okazaki fragment processing by stimulating the endonuclease activities of FEN1 and DNA2. Involved in recombination donor preference during mating-type switching via interaction with FKH1. This chain is ATP-dependent DNA helicase MPH1, found in Saccharomyces cerevisiae (strain ATCC 204508 / S288c) (Baker's yeast).